A 174-amino-acid polypeptide reads, in one-letter code: Calcium-binding protein F (174 aa).

EF-hand domains are found at residues 9–44 (KIFQEVQKFVKNYDLNKDGSVTSFDIYRSFLKKMDG), 60–83 (VDMDHDGKFTYQEIAKYCADEAKK), 92–127 (AALADVEAMLLRFDKDKDKKLTKTEFVEYFKGNGHT), and 133–162 (DQVLKIIDLDKDGCVSANELQEWFKKRRID). Positions 22, 24, 26, 28, and 33 each coordinate Ca(2+). Ca(2+)-binding residues include aspartate 105, aspartate 107, aspartate 109, lysine 111, glutamate 116, aspartate 140, aspartate 142, aspartate 144, cysteine 146, and glutamate 151.

The sequence is that of Calcium-binding protein F (cbpF) from Dictyostelium discoideum (Social amoeba).